A 391-amino-acid chain; its full sequence is Phosphoglycerate kinase (391 aa).

Substrate contacts are provided by residues 21–23 (DLN), Arg-36, 59–62 (HLGR), Arg-113, and Arg-146. ATP-binding positions include Lys-197, Glu-319, and 345–348 (GGDT).

Belongs to the phosphoglycerate kinase family. As to quaternary structure, monomer.

It is found in the cytoplasm. The catalysed reaction is (2R)-3-phosphoglycerate + ATP = (2R)-3-phospho-glyceroyl phosphate + ADP. It participates in carbohydrate degradation; glycolysis; pyruvate from D-glyceraldehyde 3-phosphate: step 2/5. The protein is Phosphoglycerate kinase of Shewanella baltica (strain OS195).